The sequence spans 455 residues: tRNA-2-methylthio-N(6)-dimethylallyladenosine synthase (455 aa).

Residues 3-117 (KGLYIESYGC…LPELIMKATR (115 aa)) form the MTTase N-terminal domain. Positions 12, 48, 80, 155, 159, and 162 each coordinate [4Fe-4S] cluster. The Radical SAM core domain occupies 141 to 375 (VSRGVSAFVS…LLTQQRLFTK (235 aa)).

This sequence belongs to the methylthiotransferase family. MiaB subfamily. In terms of assembly, monomer. The cofactor is [4Fe-4S] cluster.

Its subcellular location is the cytoplasm. The enzyme catalyses N(6)-dimethylallyladenosine(37) in tRNA + (sulfur carrier)-SH + AH2 + 2 S-adenosyl-L-methionine = 2-methylsulfanyl-N(6)-dimethylallyladenosine(37) in tRNA + (sulfur carrier)-H + 5'-deoxyadenosine + L-methionine + A + S-adenosyl-L-homocysteine + 2 H(+). Functionally, catalyzes the methylthiolation of N6-(dimethylallyl)adenosine (i(6)A), leading to the formation of 2-methylthio-N6-(dimethylallyl)adenosine (ms(2)i(6)A) at position 37 in tRNAs that read codons beginning with uridine. The protein is tRNA-2-methylthio-N(6)-dimethylallyladenosine synthase of Anaplasma marginale (strain St. Maries).